Here is a 106-residue protein sequence, read N- to C-terminus: L-rhamnose mutarotase (106 aa).

Tyrosine 20 contacts substrate. The active-site Proton donor is the histidine 24. Residues tyrosine 43 and 78–79 (WW) contribute to the substrate site.

This sequence belongs to the rhamnose mutarotase family. In terms of assembly, homodimer.

The protein localises to the cytoplasm. The catalysed reaction is alpha-L-rhamnose = beta-L-rhamnose. It functions in the pathway carbohydrate degradation; L-rhamnose degradation. In terms of biological role, involved in the anomeric conversion of L-rhamnose. This is L-rhamnose mutarotase (rhaM) from Rhizobium leguminosarum bv. trifolii.